The sequence spans 184 residues: NADH-quinone oxidoreductase subunit B (184 aa).

[4Fe-4S] cluster is bound by residues Cys37, Cys38, Cys103, and Cys132.

The protein belongs to the complex I 20 kDa subunit family. As to quaternary structure, NDH-1 is composed of 14 different subunits. Subunits NuoB, C, D, E, F, and G constitute the peripheral sector of the complex. Requires [4Fe-4S] cluster as cofactor.

The protein localises to the cell membrane. It catalyses the reaction a quinone + NADH + 5 H(+)(in) = a quinol + NAD(+) + 4 H(+)(out). Functionally, NDH-1 shuttles electrons from NADH, via FMN and iron-sulfur (Fe-S) centers, to quinones in the respiratory chain. The immediate electron acceptor for the enzyme in this species is believed to be a menaquinone. Couples the redox reaction to proton translocation (for every two electrons transferred, four hydrogen ions are translocated across the cytoplasmic membrane), and thus conserves the redox energy in a proton gradient. This is NADH-quinone oxidoreductase subunit B from Mycolicibacterium gilvum (strain PYR-GCK) (Mycobacterium gilvum (strain PYR-GCK)).